Here is a 448-residue protein sequence, read N- to C-terminus: Cyclic dof factor 3 (448 aa).

Positions 26–108 (AVTVEDDEED…DGKTLKKPTK (83 aa)) are disordered. The segment covering 29–39 (VEDDEEDDWSG) has biased composition (acidic residues). A compositionally biased stretch (basic and acidic residues) spans 40 to 54 (GDDKSPEKVTPELSD). A compositionally biased stretch (low complexity) spans 55–69 (KNNNNCNDNSFNNSK). Residues 80–99 (STDQIESSDTPEDNQQTTPD) are compositionally biased toward polar residues. A Dof-type zinc finger spans residues 110–164 (LPCPRCKSMETKFCYYNNYNINQPRHFCKACQRYWTAGGTMRNVPVGAGRRKNKS). Residues C112, C115, C137, and C140 each coordinate Zn(2+). 2 disordered regions span residues 243-269 (NGDDCSSGSSVTTSNNHSVDESRAQSG) and 332-370 (SSSPISQKCSNTNSPTLGKHPRDEGSSKKDNETERKQKA). 2 stretches are compositionally biased toward polar residues: residues 246–259 (DCSSGSSVTTSNNH) and 332–347 (SSSPISQKCSNTNSPT). The span at 351-368 (HPRDEGSSKKDNETERKQ) shows a compositional bias: basic and acidic residues.

As to quaternary structure, interacts with ADO2 (via kelch repeats) and ADO3 (via kelch repeats). In terms of tissue distribution, expressed in the vasculature of cotyledons and hypocotyls, leaves and roots.

Its subcellular location is the nucleus. Functionally, transcription factor that binds specifically to a 5'-AA[AG]G-3' consensus core sequence. Regulates a photoperiodic flowering response. Transcriptional repressor of 'CONSTANS' expression. This Arabidopsis thaliana (Mouse-ear cress) protein is Cyclic dof factor 3 (CDF3).